The following is a 647-amino-acid chain: Acetyl-coenzyme A synthetase (647 aa).

CoA is bound by residues 190–193 (RGGR) and Thr310. ATP contacts are provided by residues 386 to 388 (GEP), 410 to 415 (DTWWQT), Asp499, and Arg514. Ser522 lines the CoA pocket. Arg525 is an ATP binding site. Residues Val536, His538, and Val541 each coordinate Mg(2+). Residue Arg583 coordinates CoA. Position 608 is an N6-acetyllysine (Lys608).

This sequence belongs to the ATP-dependent AMP-binding enzyme family. It depends on Mg(2+) as a cofactor. Acetylated. Deacetylation by the SIR2-homolog deacetylase activates the enzyme.

It catalyses the reaction acetate + ATP + CoA = acetyl-CoA + AMP + diphosphate. Catalyzes the conversion of acetate into acetyl-CoA (AcCoA), an essential intermediate at the junction of anabolic and catabolic pathways. AcsA undergoes a two-step reaction. In the first half reaction, AcsA combines acetate with ATP to form acetyl-adenylate (AcAMP) intermediate. In the second half reaction, it can then transfer the acetyl group from AcAMP to the sulfhydryl group of CoA, forming the product AcCoA. In Xylella fastidiosa (strain Temecula1 / ATCC 700964), this protein is Acetyl-coenzyme A synthetase.